The following is a 290-amino-acid chain: Thymidylate synthase (290 aa).

Residues arginine 27 and 152–153 each bind dUMP; that span reads RR. Cysteine 172 (nucleophile) is an active-site residue. DUMP is bound by residues 192-195, asparagine 203, and 233-235; these read RSAD and HVY. Aspartate 195 serves as a coordination point for (6R)-5,10-methylene-5,6,7,8-tetrahydrofolate. Alanine 289 is a (6R)-5,10-methylene-5,6,7,8-tetrahydrofolate binding site.

The protein belongs to the thymidylate synthase family. In terms of assembly, homodimer.

The catalysed reaction is dUMP + (6R)-5,10-methylene-5,6,7,8-tetrahydrofolate = 7,8-dihydrofolate + dTMP. It functions in the pathway pyrimidine metabolism; dTTP biosynthesis. The sequence is that of Thymidylate synthase (TS) from Ateles.